The following is a 265-amino-acid chain: Putative hydro-lyase PST_2764 (265 aa).

The protein belongs to the D-glutamate cyclase family.

The chain is Putative hydro-lyase PST_2764 from Stutzerimonas stutzeri (strain A1501) (Pseudomonas stutzeri).